A 577-amino-acid chain; its full sequence is Arginine--tRNA ligase (577 aa).

The 'HIGH' region signature appears at 132 to 142 (ANPTGPLHVGH).

This sequence belongs to the class-I aminoacyl-tRNA synthetase family. As to quaternary structure, monomer.

The protein localises to the cytoplasm. It carries out the reaction tRNA(Arg) + L-arginine + ATP = L-arginyl-tRNA(Arg) + AMP + diphosphate. The polypeptide is Arginine--tRNA ligase (Pelagibacter ubique (strain HTCC1062)).